Consider the following 380-residue polypeptide: MTDVPIKYRLIKKEKHTGARLGEIITPHGTFPTPMFMPVGTQATVKTMSPEELKAMGSGIILSNTYHLWLRPGDELVARAGGLHKFMNWDQPILTDSGGFQVYSLADSRNISEEGVTFKNHLNGSKMFLSPEKAISIQNNLGSDIMMSFDECPQFYQPYDYVKKSIERTSRWAERGLKAHRRPHDQGLFGIVQGAGFEDLRRQSAHDLVSMDFPGYSIGGLAVGETHDEMNAVLDFTTPLLPENKPRYLMGVGAPDSLIDGVIRGVDMFDCVLPTRIARNGTCMTNRGRLVVKNAQFAEDFTPLDPECDCYTCKNYTRAYLRHLLKADETFGIRLTSYHNLYFLINLMKNVRQAIMDDNLLEFRQDFMEKYGYGKNGRNF.

The active-site Proton acceptor is the Asp-96. Substrate contacts are provided by residues 96–100 (DSGGF), Asp-150, Gln-193, and Gly-220. Residues 251-257 (GVGAPDS) form an RNA binding region. Asp-270 serves as the catalytic Nucleophile. Positions 275 to 279 (TRIAR) are RNA binding; important for wobble base 34 recognition. The Zn(2+) site is built by Cys-308, Cys-310, Cys-313, and His-339.

Belongs to the queuine tRNA-ribosyltransferase family. As to quaternary structure, homodimer. Within each dimer, one monomer is responsible for RNA recognition and catalysis, while the other monomer binds to the replacement base PreQ1. Requires Zn(2+) as cofactor.

It catalyses the reaction 7-aminomethyl-7-carbaguanine + guanosine(34) in tRNA = 7-aminomethyl-7-carbaguanosine(34) in tRNA + guanine. The protein operates within tRNA modification; tRNA-queuosine biosynthesis. Its function is as follows. Catalyzes the base-exchange of a guanine (G) residue with the queuine precursor 7-aminomethyl-7-deazaguanine (PreQ1) at position 34 (anticodon wobble position) in tRNAs with GU(N) anticodons (tRNA-Asp, -Asn, -His and -Tyr). Catalysis occurs through a double-displacement mechanism. The nucleophile active site attacks the C1' of nucleotide 34 to detach the guanine base from the RNA, forming a covalent enzyme-RNA intermediate. The proton acceptor active site deprotonates the incoming PreQ1, allowing a nucleophilic attack on the C1' of the ribose to form the product. After dissociation, two additional enzymatic reactions on the tRNA convert PreQ1 to queuine (Q), resulting in the hypermodified nucleoside queuosine (7-(((4,5-cis-dihydroxy-2-cyclopenten-1-yl)amino)methyl)-7-deazaguanosine). This chain is Queuine tRNA-ribosyltransferase, found in Streptococcus suis (strain 98HAH33).